A 309-amino-acid polypeptide reads, in one-letter code: Homoserine O-succinyltransferase (309 aa).

C142 functions as the Acyl-thioester intermediate in the catalytic mechanism. Positions 163 and 192 each coordinate substrate. H235 functions as the Proton acceptor in the catalytic mechanism. E237 is a catalytic residue. R249 contributes to the substrate binding site.

It belongs to the MetA family.

It is found in the cytoplasm. The enzyme catalyses L-homoserine + succinyl-CoA = O-succinyl-L-homoserine + CoA. The protein operates within amino-acid biosynthesis; L-methionine biosynthesis via de novo pathway; O-succinyl-L-homoserine from L-homoserine: step 1/1. Functionally, transfers a succinyl group from succinyl-CoA to L-homoserine, forming succinyl-L-homoserine. The polypeptide is Homoserine O-succinyltransferase (Klebsiella pneumoniae (strain 342)).